The following is a 379-amino-acid chain: Quinolinate synthase (379 aa).

Residues His-60 and Ser-81 each coordinate iminosuccinate. Cys-126 lines the [4Fe-4S] cluster pocket. Iminosuccinate is bound by residues 152-154 (YAN) and Ser-169. Cys-213 lines the [4Fe-4S] cluster pocket. Iminosuccinate is bound by residues 239 to 241 (HPE) and Thr-256. Residue Cys-310 participates in [4Fe-4S] cluster binding.

It belongs to the quinolinate synthase family. Type 1 subfamily. It depends on [4Fe-4S] cluster as a cofactor.

The protein resides in the cytoplasm. The catalysed reaction is iminosuccinate + dihydroxyacetone phosphate = quinolinate + phosphate + 2 H2O + H(+). It participates in cofactor biosynthesis; NAD(+) biosynthesis; quinolinate from iminoaspartate: step 1/1. In terms of biological role, catalyzes the condensation of iminoaspartate with dihydroxyacetone phosphate to form quinolinate. The chain is Quinolinate synthase from Herminiimonas arsenicoxydans.